Here is a 166-residue protein sequence, read N- to C-terminus: Disulfide bond formation protein B (166 aa).

The Cytoplasmic portion of the chain corresponds to Met-1–Thr-12. Residues Ala-13–Tyr-29 traverse the membrane as a helical segment. Residues Met-30 to Ile-47 lie on the Periplasmic side of the membrane. An intrachain disulfide couples Cys-39 to Cys-42. A helical membrane pass occupies residues Phe-48 to Pro-64. At Ala-65–Lys-70 the chain is on the cytoplasmic side. The helical transmembrane segment at Val-71–Ala-88 threads the bilayer. Over Arg-89 to Gly-145 the chain is Periplasmic. Cys-104 and Cys-131 are oxidised to a cystine. A helical transmembrane segment spans residues Trp-146–Arg-164. The Cytoplasmic segment spans residues Lys-165 to Ala-166.

It belongs to the DsbB family.

Its subcellular location is the cell inner membrane. Its function is as follows. Required for disulfide bond formation in some periplasmic proteins. Acts by oxidizing the DsbA protein. In Saccharophagus degradans (strain 2-40 / ATCC 43961 / DSM 17024), this protein is Disulfide bond formation protein B.